The primary structure comprises 80 residues: Defensin-like protein 18 (80 aa).

The first 29 residues, 1–29, serve as a signal peptide directing secretion; the sequence is MAKFCTTITLILVALVLFADFEAPTIVKA. Disulfide bonds link Cys32–Cys80, Cys43–Cys64, Cys49–Cys74, and Cys53–Cys76.

It belongs to the DEFL family.

The protein resides in the secreted. Functionally, confers broad-spectrum resistance to pathogens. The polypeptide is Defensin-like protein 18 (PDF1.5) (Arabidopsis thaliana (Mouse-ear cress)).